A 284-amino-acid polypeptide reads, in one-letter code: Asialoglycoprotein receptor 1 (284 aa).

Residues 1 to 18 are compositionally biased toward basic and acidic residues; sequence MTKDYQDFQHLDNDNDHH. The disordered stretch occupies residues 1-25; the sequence is MTKDYQDFQHLDNDNDHHQLRRGPP. The Cytoplasmic portion of the chain corresponds to 1 to 39; that stretch reads MTKDYQDFQHLDNDNDHHQLRRGPPPTPRLLQRLCSGSR. The Endocytosis signal signature appears at 5 to 8; the sequence is YQDF. Residue cysteine 35 is the site of S-palmitoyl cysteine attachment. The helical; Signal-anchor for type II membrane protein transmembrane segment at 40–60 threads the bilayer; that stretch reads LLLLSSSLSILLLVVVCVITS. Residues 59–117 are a coiled coil; it reads TSQNSQLREDLLALRQNFSNLTVSTEDQVKALSTQGSSVGRKMKLVESKLEKQQKDLTE. Over 61 to 284 the chain is Extracellular; it reads QNSQLREDLL…VCETKLDKAN (224 aa). N-linked (GlcNAc...) asparagine glycosylation is found at asparagine 75, asparagine 78, and asparagine 146. 3 disulfide bridges follow: cysteine 153/cysteine 164, cysteine 181/cysteine 276, and cysteine 254/cysteine 268. One can recognise a C-type lectin domain in the interval 160 to 277; the sequence is YEGSCYWFSS…CRRPYRWVCE (118 aa). Ca(2+) contacts are provided by valine 190, glutamate 196, aspartate 215, glutamine 239, aspartate 241, glutamate 252, aspartate 253, asparagine 264, aspartate 265, and glutamate 277.

In terms of assembly, interacts with LASS2. In terms of processing, phosphorylated on a cytoplasmic Ser residue. Expressed exclusively in hepatic parenchymal cells.

It is found in the membrane. Its function is as follows. Mediates the endocytosis of plasma glycoproteins to which the terminal sialic acid residue on their complex carbohydrate moieties has been removed. The receptor recognizes terminal galactose and N-acetylgalactosamine units. After ligand binding to the receptor, the resulting complex is internalized and transported to a sorting organelle, where receptor and ligand are disassociated. The receptor then returns to the cell membrane surface. The protein is Asialoglycoprotein receptor 1 (Asgr1) of Mus musculus (Mouse).